A 193-amino-acid chain; its full sequence is Ion-translocating oxidoreductase complex subunit A (193 aa).

Helical transmembrane passes span 5 to 25 (LMLFIGTVLVNNFVLVKFLGL), 39 to 59 (LGMGMATTFVMTLASICAWLI), 62 to 82 (FILLPLNIPYLRTLAFIFIIA), 102 to 122 (LLGIFLPLITTNCAVLGVALL), 134 to 154 (ALYGFSAAVGFSLVMVLFAAI), and 171 to 191 (SIALITAGLMSLAFMGFTGLV).

Belongs to the NqrDE/RnfAE family. In terms of assembly, the complex is composed of six subunits: RnfA, RnfB, RnfC, RnfD, RnfE and RnfG.

Its subcellular location is the cell inner membrane. Functionally, part of a membrane-bound complex that couples electron transfer with translocation of ions across the membrane. The sequence is that of Ion-translocating oxidoreductase complex subunit A from Sodalis glossinidius (strain morsitans).